Here is a 211-residue protein sequence, read N- to C-terminus: C-type lectin domain-containing protein 158 (211 aa).

An N-terminal signal peptide occupies residues 1-16; the sequence is MQKFILSAFVVALVAA.

This Caenorhabditis elegans protein is C-type lectin domain-containing protein 158 (clec-158).